Reading from the N-terminus, the 93-residue chain is Small ribosomal subunit protein uS19 (93 aa).

The tract at residues 74 to 93 (FSPTRTFRGHVKDDRKSKRR) is disordered. Residues 83–93 (HVKDDRKSKRR) are compositionally biased toward basic and acidic residues.

It belongs to the universal ribosomal protein uS19 family.

Its function is as follows. Protein S19 forms a complex with S13 that binds strongly to the 16S ribosomal RNA. This chain is Small ribosomal subunit protein uS19, found in Streptomyces griseus subsp. griseus (strain JCM 4626 / CBS 651.72 / NBRC 13350 / KCC S-0626 / ISP 5235).